The primary structure comprises 377 residues: Chaperone protein DnaJ (377 aa).

The 66-residue stretch at 5-70 (DFYEVLGVDR…EKRSAYDRMG (66 aa)) folds into the J domain. The segment at 136-214 (GCKKEISFTA…CHGTGVKDKS (79 aa)) adopts a CR-type zinc-finger fold. Zn(2+) is bound by residues Cys149, Cys152, Cys166, Cys169, Cys188, Cys191, Cys202, and Cys205. CXXCXGXG motif repeat units lie at residues 149 to 156 (CETCDGKG), 166 to 173 (CSTCGGHG), 188 to 195 (CPNCGGSG), and 202 to 209 (CNDCHGTG). Residues 353-377 (LDGDSKHHQSPKKKSFFEKLGDLFD) form a disordered region. The segment covering 367 to 377 (SFFEKLGDLFD) has biased composition (basic and acidic residues).

Belongs to the DnaJ family. In terms of assembly, homodimer. Requires Zn(2+) as cofactor.

Its subcellular location is the cytoplasm. Its function is as follows. Participates actively in the response to hyperosmotic and heat shock by preventing the aggregation of stress-denatured proteins and by disaggregating proteins, also in an autonomous, DnaK-independent fashion. Unfolded proteins bind initially to DnaJ; upon interaction with the DnaJ-bound protein, DnaK hydrolyzes its bound ATP, resulting in the formation of a stable complex. GrpE releases ADP from DnaK; ATP binding to DnaK triggers the release of the substrate protein, thus completing the reaction cycle. Several rounds of ATP-dependent interactions between DnaJ, DnaK and GrpE are required for fully efficient folding. Also involved, together with DnaK and GrpE, in the DNA replication of plasmids through activation of initiation proteins. The sequence is that of Chaperone protein DnaJ from Psychrobacter sp. (strain PRwf-1).